The sequence spans 302 residues: Protease HtpX homolog (302 aa).

A helical transmembrane segment spans residues 27 to 47 (LLMAIGGIIGGTAGMLIALII). Zn(2+) is bound at residue His-141. Residue Glu-142 is part of the active site. Residue His-145 coordinates Zn(2+). 2 consecutive transmembrane segments (helical) span residues 151–171 (VLVATIAATIAGAIGFLANMA) and 195–215 (IGAILMIIIVPIIATIVQLAI). Glu-220 contacts Zn(2+).

This sequence belongs to the peptidase M48B family. It depends on Zn(2+) as a cofactor.

The protein resides in the cell inner membrane. The polypeptide is Protease HtpX homolog (Aquifex aeolicus (strain VF5)).